The chain runs to 1275 residues: Inner capsid protein lambda-1 (1275 aa).

Basic residues predominate over residues 1 to 12; sequence MKRIPRKTRGKS. The segment at 1–147 is disordered; that stretch reads MKRIPRKTRG…NVDNEGGDNQ (147 aa). Over residues 18–35 the composition is skewed to basic and acidic residues; that stretch reads DSTERADDGSAQLRDKQS. Residues 55–66 show a composition bias toward polar residues; it reads TRPSLQTVQKAT. Basic and acidic residues-rich tracts occupy residues 80 to 98 and 105 to 117; these read AVDK…HVEA and ATKR…DKQK. The segment covering 118–139 has biased composition (polar residues); that stretch reads AQVTYNDTGINNANELSRSGNV. Residues 181 to 203 form a C2H2-type zinc finger; that stretch reads YQCHVCSAVLFSPLDLDAHVASH.

It belongs to the turreted BTV-fold inner capsid family. As to quaternary structure, homodecamer; each decamer is made up of two conformers of VP2, called VP2A and VP2B. 12 homodecamers assemble to form an icosahedral capsid. Interacts with protein mu-NS; in viral inclusions. Requires Mg(2+) as cofactor. It depends on Mn(2+) as a cofactor.

Its subcellular location is the virion. It catalyses the reaction ATP + H2O = ADP + phosphate + H(+). Its function is as follows. Inner capsid protein that self-assembles to form an icosahedral capsid with a T=2 symmetry, which consists of 120 copies of VP2, with channels at each of its five-fold vertices. This capsid constitutes the innermost concentric layer of the viral mature particle. In terms of biological role, displays NTPase, RNA 5'-triphosphatase (RTPase) and RNA helicase activities and probably participates in transcription of the viral genome. Helicase activity might be involved in unwinding or reannealing dsRNA during RNA synthesis. RTPase enzymatic activity represents the first step in RNA capping, which yields a 5'-diphosphorylated plus-strand RNA. This Reovirus type 2 (strain D5/Jones) (T2J) protein is Inner capsid protein lambda-1.